Here is a 529-residue protein sequence, read N- to C-terminus: MPFRRSSLNHRHRDGHVLVWNQRNLHESLEQQPQRCFATRYFVTFMLFLGMANAYVMRTNMSVAIVAMVNHTAIKSGEAEEYDDECGDRDIPIDDSQDGEFAWSSALQGYILSSFFYGYVITQIPFGILAKKYGSLRFLGYGMLINSVFAFLVPVAARGGGVWGLCAVRFIQGLGEGPIVPCTHAMLAKWIPPNERSRMGAAVYAGAQFGTIISMPLSGLLAEYGFDGGWPSIFYVFGIVGTVWSIAFLIFVHEDPSSHPTIDEREKKYINDSLWGTDVVKSPPIPFKAIIKSLPFYAILFAHMGHNYGYETLMTELPTYMKQVLRFSLKSNGLLSSLPYLAMWLFSMFISVVADWMISSKRFSHTATRKLINSIGQYGPGVALIAASYTGCDRALTLAILTIGVGLNGGIYSGFKINHLDLTPRFAGFLMSITNCSANLAGLLAPIAAGHLISDPSKPMMGQWQIVFFIAAFVYIICGTFYNIFGSGERQYWDNPEDDEQKPALQTTVTTSPARLSNGSTAPAAISSS.

Helical transmembrane passes span phenylalanine 37–methionine 57, tyrosine 110–alanine 130, valine 148–valine 168, alanine 202–alanine 222, serine 232–valine 252, leucine 338–isoleucine 358, phenylalanine 429–alanine 449, and isoleucine 466–glycine 486. Positions asparagine 495 to serine 529 are disordered. Residues alanine 504–serine 529 show a composition bias toward polar residues.

It belongs to the major facilitator superfamily. Sodium/anion cotransporter family.

It is found in the membrane. May be an inorganic phosphate cotransporter. The sequence is that of Putative inorganic phosphate cotransporter (Picot) from Drosophila melanogaster (Fruit fly).